Consider the following 205-residue polypeptide: Lipoprotein MlpB (205 aa).

The first 17 residues, 1–17, serve as a signal peptide directing secretion; it reads MKIINILFCLLLIVLNS. A lipid anchor (N-palmitoyl cysteine) is attached at cysteine 18. Residue cysteine 18 is the site of S-diacylglycerol cysteine attachment.

The protein belongs to the Multicopy lipoprotein (Mlp) family.

It localises to the cell outer membrane. Its function is as follows. An outer membrane protein that may participate in pathogenesis. Some human Lyme disease patients have antibodies against this protein. The Mlp proteins probably undergo intragenic recombination, generating new alleles. This is Lipoprotein MlpB from Borreliella burgdorferi (strain ATCC 35210 / DSM 4680 / CIP 102532 / B31) (Borrelia burgdorferi).